Reading from the N-terminus, the 283-residue chain is NifU-like protein 4, mitochondrial (283 aa).

A mitochondrion-targeting transit peptide spans 1–48; the sequence is MKGIARLVTSLSRIGGRKVVSGTSTVTSSSSSSLLLSRRSLFISATNL.

This sequence belongs to the NifU family. As to expression, predominantly expressed in roots.

Its subcellular location is the mitochondrion. Functionally, molecular scaffold for [Fe-S] cluster assembly of mitochondrial iron-sulfur proteins. This chain is NifU-like protein 4, mitochondrial (NIFU4), found in Arabidopsis thaliana (Mouse-ear cress).